The following is a 113-amino-acid chain: Dolichyl-diphosphooligosaccharide--protein glycosyltransferase subunit DAD1 (113 aa).

At Ser2 the chain carries N-acetylserine. Over 2–30 (SASVVSVISRFLEEYLSSTPQRLKLLDAY) the chain is Cytoplasmic. The chain crosses the membrane as a helical span at residues 31 to 51 (LLYILLTGALQFGYCLLVGTF). Position 52 (Pro52) is a topological domain, lumenal. The chain crosses the membrane as a helical span at residues 53 to 73 (FNSFLSGFISCVGSFILAVRL). Over 74–92 (RIQINPQNKADFQGISPER) the chain is Cytoplasmic. Residues 93-113 (AFADFLFASTILHLVVMNFVG) traverse the membrane as a helical segment.

This sequence belongs to the DAD/OST2 family. As to quaternary structure, component of the oligosaccharyltransferase (OST) complex. OST exists in two different complex forms which contain common core subunits RPN1, RPN2, OST48, OST4, DAD1 and TMEM258, either STT3A or STT3B as catalytic subunits, and form-specific accessory subunits. STT3A complex assembly occurs through the formation of 3 subcomplexes. Subcomplex 1 contains RPN1 and TMEM258, subcomplex 2 contains the STT3A-specific subunits STT3A, DC2/OSTC, and KCP2 as well as the core subunit OST4, and subcomplex 3 contains RPN2, DAD1, and OST48. The STT3A complex can form stable complexes with the Sec61 complex or with both the Sec61 and TRAP complexes.

Its subcellular location is the endoplasmic reticulum membrane. It functions in the pathway protein modification; protein glycosylation. In terms of biological role, subunit of the oligosaccharyl transferase (OST) complex that catalyzes the initial transfer of a defined glycan (Glc(3)Man(9)GlcNAc(2) in eukaryotes) from the lipid carrier dolichol-pyrophosphate to an asparagine residue within an Asn-X-Ser/Thr consensus motif in nascent polypeptide chains, the first step in protein N-glycosylation. N-glycosylation occurs cotranslationally and the complex associates with the Sec61 complex at the channel-forming translocon complex that mediates protein translocation across the endoplasmic reticulum (ER). All subunits are required for a maximal enzyme activity. The polypeptide is Dolichyl-diphosphooligosaccharide--protein glycosyltransferase subunit DAD1 (Pongo abelii (Sumatran orangutan)).